Here is a 124-residue protein sequence, read N- to C-terminus: Trophoblast-specific protein alpha (124 aa).

An N-terminal signal peptide occupies residues 1 to 18 (MTPTIFLVILCLGVASAV). Disordered regions lie at residues 51–74 (KLHS…SGQL) and 91–124 (FEEE…NQPQ). Residues 62-74 (EGSNIEMSASGQL) show a composition bias toward polar residues. Acidic residues predominate over residues 103–112 (DDPEFEDYTE).

It is found in the secreted. The protein localises to the extracellular space. It may be a growth factor/hormone, perhaps involved in interaction between the maternal and fetal systems in maintenance of pregnancy. In Mus musculus (Mouse), this protein is Trophoblast-specific protein alpha (Tpbpa).